The sequence spans 498 residues: Zinc finger protein 497 (498 aa).

Residues 30–104 (SEGAVSGGWG…LRPSPLPEEP (75 aa)) are disordered. 14 C2H2-type zinc fingers span residues 106–128 (CRCGECGKAFSQGSYLLQHRRVH), 134–156 (YTCPECGKAFAWSSNLSQHQRIH), 162–184 (YACRECGKAFRAHSQLIHHQETH), 190–212 (FRCPDCGKSFGRSTTLVQHRRTH), 218–240 (YECPECGKAFSWNSNFLEHRRVH), 246–268 (HACRDCGKAFSQSSNLAEHLKIH), 274–296 (HACPDCGKAFVRVAGLRQHRRTH), 302–324 (FPCAECGKAFRESSQLLQHQRTH), 330–352 (FECAECGQAFVMGSYLAEHRRVH), 358–380 (HACAQCGKAFSQRSNLLSHRRTH), 386–408 (FACADCGKAFRGSSGLAHHRLSH), 414–436 (FACAECGKAFRGSSELRQHQRLH), 442–464 (FVCAHCSKAFVRKSELLSHRRTH), and 470–492 (YACGECGKPFSHRCNLNEHQKRH).

The protein belongs to the krueppel C2H2-type zinc-finger protein family.

It is found in the nucleus. May be involved in transcriptional regulation. This Homo sapiens (Human) protein is Zinc finger protein 497 (ZNF497).